We begin with the raw amino-acid sequence, 220 residues long: Large ribosomal subunit protein uL10c (220 aa).

Residues 1 to 41 (MEVALLSFSSSLSPLCHQRISTLTPKTSNSPNYPRLPVIRS) constitute a chloroplast transit peptide.

Belongs to the universal ribosomal protein uL10 family. In terms of assembly, part of the 50S ribosomal subunit.

Its subcellular location is the plastid. The protein resides in the chloroplast. In terms of biological role, this protein binds directly to 23S ribosomal RNA. The protein is Large ribosomal subunit protein uL10c (RPL10) of Arabidopsis thaliana (Mouse-ear cress).